The sequence spans 275 residues: Interleukin-2 receptor subunit alpha (275 aa).

Positions 1–21 (MEPSLLLWGILTFVVVHGHVT) are cleaved as a signal peptide. Residues 22 to 84 (ELCDENPPDI…SWENQCRCIS (63 aa)) enclose the Sushi 1 domain. Residues 22 to 243 (ELCDENPPDI…ESFVFTTEYQ (222 aa)) lie on the Extracellular side of the membrane. Disulfide bonds link Cys-24–Cys-67, Cys-49–Cys-80, and Cys-51–Cys-82. 2 N-linked (GlcNAc...) asparagine glycosylation sites follow: Asn-60 and Asn-70. Positions 91-118 (DGQIIPKPEEQKGKSPMGMQSQMQPTDQ) are disordered. The span at 108 to 118 (GMQSQMQPTDQ) shows a compositional bias: polar residues. Residues 123-186 (GHCREPPPWE…WTQPRLQCLS (64 aa)) form the Sushi 2 domain. 2 cysteine pairs are disulfide-bonded: Cys-125–Cys-168 and Cys-152–Cys-184. Residues 188 to 213 (RSDGWFPDDEEPQASTDAALGSDTSC) are disordered. Residues 244-262 (IAVAGCVLLLISIVLLSGL) form a helical membrane-spanning segment. Residues 263–275 (TWQRRWRKSRRTI) are Cytoplasmic-facing.

As to quaternary structure, non-covalent dimer of an alpha and a beta subunit. IL2R exists in 3 different forms: a high affinity dimer, an intermediate affinity monomer (beta subunit), and a low affinity monomer (alpha subunit). The high and intermediate affinity forms also associate with a gamma subunit.

The protein resides in the membrane. In terms of biological role, receptor for interleukin-2. The receptor is involved in the regulation of immune tolerance by controlling regulatory T cells (TREGs) activity. TREGs suppress the activation and expansion of autoreactive T-cells. This chain is Interleukin-2 receptor subunit alpha (IL2RA), found in Felis catus (Cat).